The sequence spans 536 residues: Arylsulfatase K (536 aa).

The signal sequence occupies residues 1–22 (MLLLWVSVVAALALAVLAPGAG). Ca(2+)-binding residues include aspartate 40 and cysteine 80. Cysteine 80 functions as the Nucleophile in the catalytic mechanism. A 3-oxoalanine (Cys) modification is found at cysteine 80. An N-linked (GlcNAc...) asparagine glycan is attached at asparagine 108. Lysine 128 provides a ligand contact to substrate. N-linked (GlcNAc...) asparagine glycans are attached at residues asparagine 166 and asparagine 193. Histidine 251 serves as a coordination point for substrate. A glycan (N-linked (GlcNAc...) asparagine) is linked at asparagine 262. The Ca(2+) site is built by aspartate 313 and histidine 314. 3 N-linked (GlcNAc...) asparagine glycosylation sites follow: asparagine 375, asparagine 413, and asparagine 498.

It belongs to the sulfatase family. The cofactor is Ca(2+). The conversion to 3-oxoalanine (also known as C-formylglycine, FGly), of a serine or cysteine residue in prokaryotes and of a cysteine residue in eukaryotes, is critical for catalytic activity. In terms of processing, the 75-kDa precursor undergoes proteolytic processing to yield a 23 kDa form. Post-translationally, N-glycosylated with both high mannose and complex type sugars. In terms of tissue distribution, expressed at high levels in the placenta and pancreas. Expressed at intermediate levels in the lung, brain, heart, liver and kidney and at low levels in the muscle.

Its subcellular location is the secreted. The protein localises to the lysosome. It catalyses the reaction an aryl sulfate + H2O = a phenol + sulfate + H(+). The enzyme catalyses Hydrolysis of the 2-sulfate groups of the 2-O-sulfo-D-glucuronate residues of chondroitin sulfate, heparin and heparitin sulfate.. Its function is as follows. Catalyzes the hydrolysis of pseudosubstrates such as p-nitrocatechol sulfate and p-nitrophenyl sulfate. Catalyzes the hydrolysis of the 2-sulfate groups of the 2-O-sulfo-D-glucuronate residues of chondroitin sulfate, heparin and heparitin sulfate. Acts selectively on 2-sulfoglucuronate and lacks activity against 2-sulfoiduronate. The sequence is that of Arylsulfatase K (ARSK) from Homo sapiens (Human).